The primary structure comprises 1025 residues: Multidrug resistance protein MdtC (1025 aa).

The next 12 helical transmembrane spans lie at 3 to 23 (FFAL…AITL), 333 to 353 (EVEQ…FLFL), 360 to 380 (IIPA…MYLC), 387 to 407 (LSLM…IVVL), 431 to 451 (VGFT…PLLL), 463 to 483 (FAVT…TLTP), 528 to 548 (LVGV…ISIP), 853 to 873 (VILI…LYES), 875 to 895 (VHPL…LLAL), 897 to 917 (LFNA…IGIV), 953 to 973 (PIMM…LSGG), and 984 to 1004 (ITIV…TPVV).

The protein belongs to the resistance-nodulation-cell division (RND) (TC 2.A.6) family. MdtC subfamily. As to quaternary structure, part of a tripartite efflux system composed of MdtA, MdtB and MdtC. MdtC forms a heteromultimer with MdtB.

The protein localises to the cell inner membrane. The MdtABC tripartite complex confers resistance against novobiocin and deoxycholate. The chain is Multidrug resistance protein MdtC from Escherichia coli O7:K1 (strain IAI39 / ExPEC).